The following is a 443-amino-acid chain: Probable nitrate/nitrite antiporter NarK1 (443 aa).

The next 12 helical transmembrane spans lie at 23 to 43, 56 to 76, 79 to 99, 108 to 128, 142 to 164, 182 to 202, 230 to 250, 255 to 275, 298 to 318, 329 to 349, 368 to 388, and 401 to 421; these read TLAF…GVPI, WISA…GILA, YGGR…AYLV, LLLY…GIAW, LGVF…ALIA, FIPF…WFGT, FSLY…WLPK, VFGL…FPAS, FGII…IVLY, FTMG…GMGI, AVGG…PPLF, and TFFV…LTVL.

The protein belongs to the major facilitator superfamily. Nitrate/nitrite porter (TC 2.A.1.8) family.

It localises to the cell membrane. The catalysed reaction is nitrate(in) + nitrite(out) = nitrate(out) + nitrite(in). Probable nitrate/nitrite antiporter that may be involved in nitrate import and nitrite export during anaerobic growth. The chain is Probable nitrate/nitrite antiporter NarK1 from Thermus thermophilus.